Consider the following 414-residue polypeptide: MVLGKVKSLTISFDCLNDSNVPVYSSGDTVSGRVNLEVTGEIRVKSLKIHARGHAKVRWTESRNAGSNTAYTQNYTEEVEYFNHKDILIGHERDDDNSEEGFHTIHSGRHEYAFSFELPQTPLATSFEGRHGSVRYWVKAELHRPWLLPVKLKKEFTVFEHIDINTPSLLSPQAGTKEKTLCCWFCTSGPISLSAKIERKGYTPGESIQIFAEIENCSSRMVVPKAAIYQTQAFYAKGKMKEVKQLVANLRGESLSSGKTETWNGKLLKIPPVSPSILDCSIIRVEYSLMVYVDIPGAMDLLLSLPLVIGTIPLHPFGSRTSSVSSQCSMSMNWLALALPERPEAPPSYAEVVTEEQRRNNLAPVGACDDFERALQGPLFAYIQEFRFLPPPLYSEIDPNPDQSSEDRPSCPSR.

Short sequence motifs (PPxY motif) lie at residues 346–349 and 391–394; these read PPSY and PPLY. The segment at 393–414 is disordered; the sequence is LYSEIDPNPDQSSEDRPSCPSR. The segment covering 405 to 414 has biased composition (basic and acidic residues); the sequence is SEDRPSCPSR.

Belongs to the arrestin family. As to quaternary structure, interacts (via PPxY motifs) with NEDD4 (via WW domains). Interacts with ADRB2. Interacts with ADRB3. Interacts with HGS (via PPxY motifs). Does not bind TXN (thioredoxin). Interacts with ITCH. Detected in visceral fat, subcutaneous fat, brown fat and skeletal muscle, and at lower levels in kidney.

It is found in the cytoplasm. It localises to the cell membrane. Its subcellular location is the lysosome. The protein resides in the endosome. The protein localises to the early endosome. Adapter protein that plays a role in regulating cell-surface expression of adrenergic receptors and probably also other G protein-coupled receptors. Plays a role in NEDD4-mediated ubiquitination and endocytosis af activated ADRB2 and subsequent ADRB2 degradation. May recruit NEDD4 to ADRB2. Alternatively, may function as adapter protein that does not play a major role in recruiting NEDD4 to ADRB2, but rather plays a role in a targeting ADRB2 to endosomes. The sequence is that of Arrestin domain-containing protein 3 (Arrdc3) from Mus musculus (Mouse).